We begin with the raw amino-acid sequence, 289 residues long: D-alanine aminotransferase (289 aa).

Residue Tyr-31 coordinates substrate. Arg-50 is a binding site for pyridoxal 5'-phosphate. The substrate site is built by Arg-99 and His-101. Catalysis depends on Lys-147, which acts as the Proton acceptor. Lys-147 is subject to N6-(pyridoxal phosphate)lysine. Glu-179 is a pyridoxal 5'-phosphate binding site.

This sequence belongs to the class-IV pyridoxal-phosphate-dependent aminotransferase family. Homodimer. Requires pyridoxal 5'-phosphate as cofactor.

The enzyme catalyses D-alanine + 2-oxoglutarate = D-glutamate + pyruvate. Its function is as follows. Acts on the D-isomers of alanine, leucine, aspartate, glutamate, aminobutyrate, norvaline and asparagine. The enzyme transfers an amino group from a substrate D-amino acid to the pyridoxal phosphate cofactor to form pyridoxamine and an alpha-keto acid in the first half-reaction. The second half-reaction is the reverse of the first, transferring the amino group from the pyridoxamine to a second alpha-keto acid to form the product D-amino acid via a ping-pong mechanism. This is an important process in the formation of D-alanine and D-glutamate, which are essential bacterial cell wall components. This Listeria monocytogenes serotype 4b (strain F2365) protein is D-alanine aminotransferase (dat).